The chain runs to 146 residues: Catabolic 3-dehydroquinase (146 aa).

Catalysis depends on tyrosine 24, which acts as the Proton acceptor. Positions 78, 84, and 91 each coordinate substrate. Histidine 104 (proton donor) is an active-site residue. Substrate contacts are provided by residues 105 to 106 (IT) and arginine 115.

This sequence belongs to the type-II 3-dehydroquinase family. In terms of assembly, homododecamer. Adopts a ring-like structure, composed of an arrangement of two hexameric rings stacked on top of one another.

It catalyses the reaction 3-dehydroquinate = 3-dehydroshikimate + H2O. It participates in aromatic compound metabolism; 3,4-dihydroxybenzoate biosynthesis; 3,4-dihydroxybenzoate from 3-dehydroquinate: step 1/2. Its function is as follows. Is involved in the catabolism of quinate. Allows the utilization of quinate as carbon source via the beta-ketoadipate pathway. This Scheffersomyces stipitis (strain ATCC 58785 / CBS 6054 / NBRC 10063 / NRRL Y-11545) (Yeast) protein is Catabolic 3-dehydroquinase.